Consider the following 488-residue polypeptide: Multidrug resistance outer membrane protein MdtP (488 aa).

A signal peptide spans Met1–Gly23. Residue Cys24 is the site of N-palmitoyl cysteine attachment. A lipid anchor (S-diacylglycerol cysteine) is attached at Cys24.

It belongs to the outer membrane factor (OMF) (TC 1.B.17) family. Could be part of a tripartite efflux system composed of MdtN, MdtO and MdtP.

The protein resides in the cell outer membrane. In terms of biological role, could be involved in resistance to puromycin, acriflavine and tetraphenylarsonium chloride. This Escherichia coli O6:H1 (strain CFT073 / ATCC 700928 / UPEC) protein is Multidrug resistance outer membrane protein MdtP (mdtP).